The chain runs to 289 residues: Probable WRKY transcription factor 38 (289 aa).

Residues 62 to 103 form a disordered region; it reads PETEDDQFSDLSSRDSSPPPQGSPSKKRKIDSTNSSENWRDD. The segment at residues 104–172 is a DNA-binding region (WRKY); it reads SPDPIYYDGY…YFGHHTCKTE (69 aa). The segment covering 249 to 266 has biased composition (low complexity); that stretch reads LSSPSGSYPPSSSSGSES. The interval 249–278 is disordered; it reads LSSPSGSYPPSSSSGSESADFNSDLLFDNP.

Belongs to the WRKY group III family.

Its subcellular location is the nucleus. Functionally, transcription factor. Interacts specifically with the W box (5'-(T)TGAC[CT]-3'), a frequently occurring elicitor-responsive cis-acting element. The polypeptide is Probable WRKY transcription factor 38 (WRKY38) (Arabidopsis thaliana (Mouse-ear cress)).